The primary structure comprises 509 residues: Maturase K (509 aa).

Belongs to the intron maturase 2 family. MatK subfamily.

It localises to the plastid. The protein resides in the chloroplast. Usually encoded in the trnK tRNA gene intron. Probably assists in splicing its own and other chloroplast group II introns. This Otacanthus azureus (Brazilian snapdragon) protein is Maturase K.